Consider the following 192-residue polypeptide: Protein SHORT HYPOCOTYL IN WHITE LIGHT 1 (192 aa).

A Nuclear localization signal motif is present at residues 43–50 (FRRLNRSL). A disordered region spans residues 70–92 (GGDNYDVVPDDDGFSDDDDEEDE). The segment covering 77-92 (VPDDDGFSDDDDEEDE) has biased composition (acidic residues). A run of 2 helical transmembrane segments spans residues 122-142 (ILPAAMSPRLVSFAVDGILLL) and 159-179 (GGTVFTVILLIRLFWAAASFF).

Interacts with HY5 and COP1 in the nucleus. Expressed in young seedlings (e.g. hypocotyl and cotyledons) and in green tissues (e.g. leaves, stems, sepals, and young siliques).

The protein localises to the nucleus membrane. Negative regulator of photomorphogenesis modulating both light and abscisic acid (ABA) signaling pathways. Negatively regulates the light-mediated inhibition of hypocotyl elongation, probably in a PHYB-mediated signaling pathway, but promotes flowering time (especially in long days) and lateral root formation. Enhances light-regulated gene expression. Promotes COP1-mediated degradation of HY5 during seedling development (e.g. hypocotyl growth) through enhanced ubiquitination in the darkness. Also involved in root gravitropism. This chain is Protein SHORT HYPOCOTYL IN WHITE LIGHT 1, found in Arabidopsis thaliana (Mouse-ear cress).